The sequence spans 426 residues: Serine--tRNA ligase (426 aa).

233–235 (TSE) contacts L-serine. 264–266 (RAE) contacts ATP. E287 provides a ligand contact to L-serine. 351–354 (EISS) is an ATP binding site. Position 387 (S387) interacts with L-serine.

Belongs to the class-II aminoacyl-tRNA synthetase family. Type-1 seryl-tRNA synthetase subfamily. As to quaternary structure, homodimer. The tRNA molecule binds across the dimer.

The protein resides in the cytoplasm. The enzyme catalyses tRNA(Ser) + L-serine + ATP = L-seryl-tRNA(Ser) + AMP + diphosphate + H(+). It carries out the reaction tRNA(Sec) + L-serine + ATP = L-seryl-tRNA(Sec) + AMP + diphosphate + H(+). It functions in the pathway aminoacyl-tRNA biosynthesis; selenocysteinyl-tRNA(Sec) biosynthesis; L-seryl-tRNA(Sec) from L-serine and tRNA(Sec): step 1/1. In terms of biological role, catalyzes the attachment of serine to tRNA(Ser). Is also able to aminoacylate tRNA(Sec) with serine, to form the misacylated tRNA L-seryl-tRNA(Sec), which will be further converted into selenocysteinyl-tRNA(Sec). This is Serine--tRNA ligase from Stenotrophomonas maltophilia (strain K279a).